Here is a 383-residue protein sequence, read N- to C-terminus: UDP-N-acetylglucosamine--N-acetylmuramyl-(pentapeptide) pyrophosphoryl-undecaprenol N-acetylglucosamine transferase (383 aa).

Residues 10–12, Asn-124, Arg-165, Ser-190, Ile-245, and Gln-290 contribute to the UDP-N-acetyl-alpha-D-glucosamine site; that span reads TGG. The interval 364 to 383 is disordered; the sequence is PFGQAREPGQKPARPPDLAS.

This sequence belongs to the glycosyltransferase 28 family. MurG subfamily.

The protein localises to the cell inner membrane. It catalyses the reaction di-trans,octa-cis-undecaprenyl diphospho-N-acetyl-alpha-D-muramoyl-L-alanyl-D-glutamyl-meso-2,6-diaminopimeloyl-D-alanyl-D-alanine + UDP-N-acetyl-alpha-D-glucosamine = di-trans,octa-cis-undecaprenyl diphospho-[N-acetyl-alpha-D-glucosaminyl-(1-&gt;4)]-N-acetyl-alpha-D-muramoyl-L-alanyl-D-glutamyl-meso-2,6-diaminopimeloyl-D-alanyl-D-alanine + UDP + H(+). It participates in cell wall biogenesis; peptidoglycan biosynthesis. In terms of biological role, cell wall formation. Catalyzes the transfer of a GlcNAc subunit on undecaprenyl-pyrophosphoryl-MurNAc-pentapeptide (lipid intermediate I) to form undecaprenyl-pyrophosphoryl-MurNAc-(pentapeptide)GlcNAc (lipid intermediate II). The protein is UDP-N-acetylglucosamine--N-acetylmuramyl-(pentapeptide) pyrophosphoryl-undecaprenol N-acetylglucosamine transferase of Anaeromyxobacter dehalogenans (strain 2CP-C).